The sequence spans 662 residues: Transketolase (662 aa).

His28 is a binding site for substrate. Residues His68 and 115 to 117 (GPL) each bind thiamine diphosphate. Asp156 lines the Mg(2+) pocket. Residues Gly157 and Asn186 each contribute to the thiamine diphosphate site. Mg(2+) contacts are provided by Asn186 and Ile188. Residues His261, Arg356, and Ser383 each coordinate substrate. His261 contacts thiamine diphosphate. The active-site Proton donor is Glu410. Phe436 serves as a coordination point for thiamine diphosphate. Residues His460, Asp468, and Arg519 each contribute to the substrate site.

It belongs to the transketolase family. As to quaternary structure, homodimer. Requires Mg(2+) as cofactor. Ca(2+) serves as cofactor. The cofactor is Mn(2+). It depends on Co(2+) as a cofactor. Thiamine diphosphate is required as a cofactor.

It carries out the reaction D-sedoheptulose 7-phosphate + D-glyceraldehyde 3-phosphate = aldehydo-D-ribose 5-phosphate + D-xylulose 5-phosphate. It participates in carbohydrate biosynthesis; Calvin cycle. It functions in the pathway carbohydrate degradation; pentose phosphate pathway. Its function is as follows. Catalyzes the transfer of a two-carbon ketol group from a ketose donor to an aldose acceptor, via a covalent intermediate with the cofactor thiamine pyrophosphate. This chain is Transketolase (tkt), found in Staphylococcus epidermidis (strain ATCC 35984 / DSM 28319 / BCRC 17069 / CCUG 31568 / BM 3577 / RP62A).